The primary structure comprises 395 residues: S-adenosylmethionine synthase (395 aa).

His16 is a binding site for ATP. Asp18 contacts Mg(2+). Residue Glu44 participates in K(+) binding. 2 residues coordinate L-methionine: Glu57 and Gln100. Residues 100-110 form a flexible loop region; it reads QSPDIAQGVDR. ATP-binding positions include 167–169, 233–234, Asp242, 248–249, Ala265, and Lys269; these read DAK, RF, and RK. Asp242 serves as a coordination point for L-methionine. Residue Lys273 coordinates L-methionine.

Belongs to the AdoMet synthase family. As to quaternary structure, homotetramer; dimer of dimers. Mg(2+) is required as a cofactor. Requires K(+) as cofactor.

The protein resides in the cytoplasm. The enzyme catalyses L-methionine + ATP + H2O = S-adenosyl-L-methionine + phosphate + diphosphate. It functions in the pathway amino-acid biosynthesis; S-adenosyl-L-methionine biosynthesis; S-adenosyl-L-methionine from L-methionine: step 1/1. Its function is as follows. Catalyzes the formation of S-adenosylmethionine (AdoMet) from methionine and ATP. The overall synthetic reaction is composed of two sequential steps, AdoMet formation and the subsequent tripolyphosphate hydrolysis which occurs prior to release of AdoMet from the enzyme. In Burkholderia cenocepacia (strain ATCC BAA-245 / DSM 16553 / LMG 16656 / NCTC 13227 / J2315 / CF5610) (Burkholderia cepacia (strain J2315)), this protein is S-adenosylmethionine synthase.